A 220-amino-acid polypeptide reads, in one-letter code: Iron-sulfur cluster repair protein YtfE (220 aa).

This sequence belongs to the RIC family. YtfE subfamily. As to quaternary structure, homodimer.

It is found in the cytoplasm. In terms of biological role, di-iron-containing protein involved in the repair of iron-sulfur clusters damaged by oxidative and nitrosative stress conditions. This chain is Iron-sulfur cluster repair protein YtfE, found in Escherichia coli (strain SMS-3-5 / SECEC).